We begin with the raw amino-acid sequence, 344 residues long: MTQKLTITRPDDWHLHLRDGAALAAVLPDTARQFARAIVMPNLKPPVTTVAQAQAYRARILAALPAGMQFEPLMTLYLTDNTGPEEIAAARASGFVHGVKLYPAGATTNSDAGVTDIRRCYPALEAMQRAGLPLLVHGEVTDPAIDIFDREAVFIERVMTPLRRDMPELKVVFEHITTKDAAQYVRDASGPVGATITAHHLLYNRNAIFTGGIRPHYYCLPVLKRETHREALVAAATSGSERFFLGTDSAPHARGLKEHACGCAGCYTALHAMELYAEAFDAAGALDKLEAFASFNGPAFYGLPRNTGTLTLEREDWELPAELPYGDTTLVPLRGGETLRWKAR.

The Zn(2+) site is built by His14 and His16. Residues 16–18 and Asn42 contribute to the substrate site; that span reads HLR. Zn(2+) contacts are provided by Lys100, His137, and His175. Lys100 is subject to N6-carboxylysine. Residue His137 coordinates substrate. Residue Leu220 coordinates substrate. Residue Asp248 coordinates Zn(2+). Asp248 is a catalytic residue. Residues His252 and Ala264 each contribute to the substrate site.

Belongs to the metallo-dependent hydrolases superfamily. DHOase family. Class II DHOase subfamily. As to quaternary structure, homodimer. Zn(2+) is required as a cofactor.

It catalyses the reaction (S)-dihydroorotate + H2O = N-carbamoyl-L-aspartate + H(+). Its pathway is pyrimidine metabolism; UMP biosynthesis via de novo pathway; (S)-dihydroorotate from bicarbonate: step 3/3. Its function is as follows. Catalyzes the reversible cyclization of carbamoyl aspartate to dihydroorotate. The sequence is that of Dihydroorotase from Cupriavidus taiwanensis (strain DSM 17343 / BCRC 17206 / CCUG 44338 / CIP 107171 / LMG 19424 / R1) (Ralstonia taiwanensis (strain LMG 19424)).